Consider the following 437-residue polypeptide: GTPase Obg (437 aa).

An Obg domain is found at 2-160; that stretch reads SMFLDTAKIS…RQLELELKIL (159 aa). Residues 161–338 enclose the OBG-type G domain; it reads ADVGLVGFPS…LLEATAELLA (178 aa). Residues 167 to 174, 192 to 196, 214 to 217, 284 to 287, and 319 to 321 contribute to the GTP site; these read GFPSVGKS, FTTIV, DLPG, NKMD, and SSL. Mg(2+) contacts are provided by S174 and T194. The 79-residue stretch at 359 to 437 folds into the OCT domain; that stretch reads GFAETEKDFE…IGKFEFEFVD (79 aa).

Belongs to the TRAFAC class OBG-HflX-like GTPase superfamily. OBG GTPase family. As to quaternary structure, monomer. Requires Mg(2+) as cofactor.

The protein resides in the cytoplasm. An essential GTPase which binds GTP, GDP and possibly (p)ppGpp with moderate affinity, with high nucleotide exchange rates and a fairly low GTP hydrolysis rate. Plays a role in control of the cell cycle, stress response, ribosome biogenesis and in those bacteria that undergo differentiation, in morphogenesis control. The chain is GTPase Obg from Streptococcus pyogenes serotype M1.